A 277-amino-acid chain; its full sequence is uncharacterized protein (277 aa).

Solcar repeat units lie at residues Met1–Val84, Ile96–Trp179, and Pro184–His268. Transmembrane regions (helical) follow at residues Gln3–Ala24, Leu60–Phe80, Leu102–Val122, Cys152–Ala172, Ile190–Ile210, and Phe240–Val261.

It belongs to the mitochondrial carrier (TC 2.A.29) family.

The protein localises to the mitochondrion inner membrane. This is an uncharacterized protein from Schizosaccharomyces pombe (strain 972 / ATCC 24843) (Fission yeast).